The primary structure comprises 492 residues: GMP reductase (492 aa).

NADP(+) contacts are provided by residues 30 to 31 (SR) and R78. 2 CBS domains span residues 99 to 162 (LIED…LVET) and 164 to 223 (MTPV…RNAT). Residues 260 to 262 (DIA) and 313 to 314 (VG) contribute to the NADP(+) site. Residues G314, G316, and C319 each coordinate K(+). C319 serves as the catalytic Thioimidate intermediate. T321 functions as the Proton donor/acceptor in the catalytic mechanism. R322 contributes to the K(+) binding site. Residues 352–354 (DGG), 375–376 (GN), and 401–403 (GMA) contribute to the GMP site. NADP(+)-binding positions include M402 and 454–457 (SGIS). The Microbody targeting signal motif lies at 490-492 (SKL).

The protein belongs to the IMPDH/GMPR family. GuaC type 1 subfamily. Homotetramer.

It is found in the glycosome. The catalysed reaction is IMP + NH4(+) + NADP(+) = GMP + NADPH + 2 H(+). With respect to regulation, activated by GTP and inhibited by XMP and the IMP analogs allopurinol nucleotide and thiopurinol nucleotide. Its function is as follows. Catalyzes the irreversible NADPH-dependent deamination of GMP to IMP. It functions in the conversion of nucleobase, nucleoside and nucleotide derivatives of G to A nucleotides, and in maintaining the intracellular balance of A and G nucleotides. This Leishmania donovani protein is GMP reductase.